A 436-amino-acid chain; its full sequence is Alpha-galactosidase mel1 (436 aa).

The first 24 residues, 1 to 24 (MISISFLNCFFLVFLFLFFSDVHG), serve as a signal peptide directing secretion. Cysteine 45 and cysteine 77 are disulfide-bonded. The N-linked (GlcNAc...) asparagine glycan is linked to asparagine 84. A disulfide bridge links cysteine 126 with cysteine 156. Aspartate 154 serves as the catalytic Nucleophile. Asparagine 180 carries an N-linked (GlcNAc...) asparagine glycan. Catalysis depends on aspartate 214, which acts as the Proton donor.

It belongs to the glycosyl hydrolase 27 family.

It is found in the endoplasmic reticulum lumen. The protein localises to the secreted. It carries out the reaction Hydrolysis of terminal, non-reducing alpha-D-galactose residues in alpha-D-galactosides, including galactose oligosaccharides, galactomannans and galactolipids.. In terms of biological role, secreted alpha-galactosidase required for catabolic conversion of melibiose to glucose and galactose. The protein is Alpha-galactosidase mel1 (mel1) of Schizosaccharomyces pombe (strain 972 / ATCC 24843) (Fission yeast).